The chain runs to 530 residues: Bifunctional purine biosynthesis protein PurH (530 aa).

An MGS-like domain is found at 1 to 147 (MPSIKRALIS…KNWKHVAIVT (147 aa)).

This sequence belongs to the PurH family.

The catalysed reaction is (6R)-10-formyltetrahydrofolate + 5-amino-1-(5-phospho-beta-D-ribosyl)imidazole-4-carboxamide = 5-formamido-1-(5-phospho-D-ribosyl)imidazole-4-carboxamide + (6S)-5,6,7,8-tetrahydrofolate. The enzyme catalyses IMP + H2O = 5-formamido-1-(5-phospho-D-ribosyl)imidazole-4-carboxamide. It functions in the pathway purine metabolism; IMP biosynthesis via de novo pathway; 5-formamido-1-(5-phospho-D-ribosyl)imidazole-4-carboxamide from 5-amino-1-(5-phospho-D-ribosyl)imidazole-4-carboxamide (10-formyl THF route): step 1/1. Its pathway is purine metabolism; IMP biosynthesis via de novo pathway; IMP from 5-formamido-1-(5-phospho-D-ribosyl)imidazole-4-carboxamide: step 1/1. This is Bifunctional purine biosynthesis protein PurH from Neisseria meningitidis serogroup A / serotype 4A (strain DSM 15465 / Z2491).